Consider the following 268-residue polypeptide: Tetraspanin-5 (268 aa).

Over 1 to 17 (MSGKHYKGPEVSCCIKY) the chain is Cytoplasmic. Residues 18–38 (FIFGFNVIFWFLGITFLGIGL) form a helical membrane-spanning segment. Residues 39–61 (WAWNEKGVLSNISSITDLGGFDP) lie on the Extracellular side of the membrane. An N-linked (GlcNAc...) asparagine glycan is attached at Asn-49. Residues 62–82 (VWLFLVVGGVMFILGFAGCIG) traverse the membrane as a helical segment. At 83–92 (ALRENTFLLK) the chain is on the cytoplasmic side. Residues 93-113 (FFSVFLGIIFFLELTAGVLAF) traverse the membrane as a helical segment. The Extracellular segment spans residues 114–232 (VFKDWIKDQL…PQFEKWLQDN (119 aa)). Cystine bridges form between Cys-153–Cys-221, Cys-154–Cys-186, Cys-170–Cys-180, and Cys-187–Cys-200. Residues Asn-169 and Asn-174 are each glycosylated (N-linked (GlcNAc...) asparagine). An N-linked (GlcNAc...) asparagine glycan is attached at Asn-232. The chain crosses the membrane as a helical span at residues 233-253 (LTIVAGIFIGIALLQIFGICL). Residues 254 to 268 (AQNLVSDIEAVRASW) are Cytoplasmic-facing.

The protein belongs to the tetraspanin (TM4SF) family. Interacts with ADAM10; the interaction influences ADAM10 substrate specificity, endocytosis and turnover. Palmitoylated.

It is found in the cell membrane. In terms of biological role, part of TspanC8 subgroup, composed of 6 members that interact with the transmembrane metalloprotease ADAM10. This interaction is required for ADAM10 exit from the endoplasmic reticulum and for enzymatic maturation and trafficking to the cell surface as well as substrate specificity. Different TspanC8/ADAM10 complexes have distinct substrates. Promotes ADAM10-mediated cleavage of CD44. Seems to regulate VE-cadherin expression in endothelial cells probably through interaction with ADAM10, promoting leukocyte transmigration. This chain is Tetraspanin-5, found in Homo sapiens (Human).